The following is a 508-amino-acid chain: Photosystem II CP47 reaction center protein (508 aa).

Transmembrane regions (helical) follow at residues 21–36 (SVHL…WAGS), 101–115 (IILS…IWHW), 140–156 (GVHL…FGVF), 203–218 (IAAG…FHVL), 237–252 (VLSS…AFVV), and 457–472 (SFAL…HGAR).

It belongs to the PsbB/PsbC family. PsbB subfamily. In terms of assembly, PSII is composed of 1 copy each of membrane proteins PsbA, PsbB, PsbC, PsbD, PsbE, PsbF, PsbH, PsbI, PsbJ, PsbK, PsbL, PsbM, PsbT, PsbY, PsbZ, Psb30/Ycf12, at least 3 peripheral proteins of the oxygen-evolving complex and a large number of cofactors. It forms dimeric complexes. It depends on Binds multiple chlorophylls. PSII binds additional chlorophylls, carotenoids and specific lipids. as a cofactor.

The protein resides in the plastid. The protein localises to the chloroplast thylakoid membrane. Functionally, one of the components of the core complex of photosystem II (PSII). It binds chlorophyll and helps catalyze the primary light-induced photochemical processes of PSII. PSII is a light-driven water:plastoquinone oxidoreductase, using light energy to abstract electrons from H(2)O, generating O(2) and a proton gradient subsequently used for ATP formation. The protein is Photosystem II CP47 reaction center protein of Euglena gracilis.